The following is a 63-amino-acid chain: Large ribosomal subunit protein bL32 (63 aa).

It belongs to the bacterial ribosomal protein bL32 family.

This Lacticaseibacillus paracasei (strain ATCC 334 / BCRC 17002 / CCUG 31169 / CIP 107868 / KCTC 3260 / NRRL B-441) (Lactobacillus paracasei) protein is Large ribosomal subunit protein bL32.